Reading from the N-terminus, the 206-residue chain is Small ribosomal subunit protein uS4 (206 aa).

The 62-residue stretch at 96-157 (SRLDNVVYRM…KAQKQLRVQA (62 aa)) folds into the S4 RNA-binding domain.

This sequence belongs to the universal ribosomal protein uS4 family. Part of the 30S ribosomal subunit. Contacts protein S5. The interaction surface between S4 and S5 is involved in control of translational fidelity.

Its function is as follows. One of the primary rRNA binding proteins, it binds directly to 16S rRNA where it nucleates assembly of the body of the 30S subunit. In terms of biological role, with S5 and S12 plays an important role in translational accuracy. This Alkalilimnicola ehrlichii (strain ATCC BAA-1101 / DSM 17681 / MLHE-1) protein is Small ribosomal subunit protein uS4.